The sequence spans 649 residues: Stress-70 protein, mitochondrial (649 aa).

The transit peptide at Met-1–Tyr-46 directs the protein to the mitochondrion. The interaction with NFS1 stretch occupies residues Met-1–Val-432. The ADP site is built by Thr-63 and Asn-64. Residues Thr-63–Asp-431 are nucleotide-binding domain (NBD). Lys-76 is modified (N6-acetyllysine). Position 87 is a phosphothreonine (Thr-87). An N6-acetyllysine; alternate mark is found at Lys-135 and Lys-138. Residues Lys-135 and Lys-138 each carry the N6-succinyllysine; alternate modification. Lys-143 bears the N6-acetyllysine mark. Lys-206 bears the N6-acetyllysine; alternate mark. Residue Lys-206 is modified to N6-succinyllysine; alternate. Lys-206 bears the N6-malonyllysine; alternate mark. An N6-acetyllysine mark is found at Lys-234 and Lys-288. Position 300 is an N6-acetyllysine; alternate (Lys-300). The residue at position 300 (Lys-300) is an N6-succinyllysine; alternate. ADP-binding residues include Glu-313, Lys-316, and Ser-320. Lys-368 is subject to N6-succinyllysine. Gly-388 and Arg-391 together coordinate ADP. An N6-succinyllysine modification is found at Lys-394. Ser-408 is modified (phosphoserine). An interdomain linker region spans residues Val-432–Thr-441. N6-acetyllysine; alternate is present on residues Lys-565, Lys-598, and Lys-638. Residues Lys-565, Lys-598, and Lys-638 each carry the N6-succinyllysine; alternate modification.

Belongs to the heat shock protein 70 family. Interacts strongly with the intermediate form of FXN and weakly with its mature form. Interacts with HSCB. Associates with the mitochondrial contact site and cristae organizing system (MICOS) complex, composed of at least MICOS10/MIC10, CHCHD3/MIC19, CHCHD6/MIC25, APOOL/MIC27, IMMT/MIC60, APOO/MIC23/MIC26 and QIL1/MIC13. This complex was also known under the names MINOS or MitOS complex. The MICOS complex associates with mitochondrial outer membrane proteins SAMM50, MTX1, MTX2 and DNAJC11, mitochondrial inner membrane protein TMEM11 and with HSPA9. Interacts with DNLZ, the interaction is required to prevent self-aggregation. Interacts with TESPA1. Interacts with PDPN. Interacts with NFU1, NFS1 and ISCU. Interacts with TP53; the interaction promotes TP53 degradation. Interacts (via SBD domain) with UBXN2A; the interaction with UBXN2A inhibits HSPA9/MOT-2 interaction with and degradation of TP53, thereby promotes TP53 translocation to the nucleus. Interacts with ITPR1 AND VDAC1; this interaction couples ITPR1 to VDAC1. Component of the TIM23 mitochondrial inner membrane pre-sequence translocase complex.

The protein resides in the mitochondrion. The protein localises to the nucleus. Its subcellular location is the nucleolus. It localises to the cytoplasm. It is found in the mitochondrion matrix. The enzyme catalyses ATP + H2O = ADP + phosphate + H(+). The chaperone activity is regulated by ATP-induced allosteric coupling of the nucleotide-binding (NBD) and substrate-binding (SBD) domains. ATP binding in the NBD leads to a conformational change in the NBD, which is transferred through the interdomain linker (IDL) to the substrate-binding domain (SBD). This elicits a reduced substrate affinity and a faster substrate exchange rate. Upon hydrolysis of ATP to ADP, the protein undergoes a conformational change that increases its affinity for substrate proteins. It cycles through repeated phases of ATP hydrolysis and nucleotide exchange, facilitating repeated cycles of substrate binding and release. Functions in collaboration with co-chaperones. Functions with the co-chaperone, DNLZ, to maintain solubility and regulate ATP hydrolysis. Nucleotide exchange factors, GRPEL1 and GRPEL2, accelerate nucleotide exchange. Its function is as follows. Mitochondrial chaperone that plays a key role in mitochondrial protein import, folding, and assembly. Plays an essential role in the protein quality control system, the correct folding of proteins, the re-folding of misfolded proteins, and the targeting of proteins for subsequent degradation. These processes are achieved through cycles of ATP binding, ATP hydrolysis, and ADP release, mediated by co-chaperones. In mitochondria, it associates with the TIM (translocase of the inner membrane) protein complex to assist in the import and folding of mitochondrial proteins. Plays an important role in mitochondrial iron-sulfur cluster (ISC) biogenesis, interacts with and stabilizes ISC cluster assembly proteins FXN, NFU1, NFS1 and ISCU. Regulates erythropoiesis via stabilization of ISC assembly. Regulates mitochondrial calcium-dependent apoptosis by coupling two calcium channels, ITPR1 and VDAC1, at the mitochondria-associated endoplasmic reticulum (ER) membrane to facilitate calcium transport from the ER lumen to the mitochondria intermembrane space, providing calcium for the downstream calcium channel MCU, which releases it into the mitochondrial matrix. Although primarily located in the mitochondria, it is also found in other cellular compartments. In the cytosol, it associates with proteins involved in signaling, apoptosis, or senescence. It may play a role in cell cycle regulation via its interaction with and promotion of degradation of TP53. May play a role in the control of cell proliferation and cellular aging. Protects against reactive oxygen species (ROS). Extracellular HSPA9 plays a cytoprotective role by preventing cell lysis following immune attack by the membrane attack complex by disrupting formation of the complex. In Canis lupus familiaris (Dog), this protein is Stress-70 protein, mitochondrial.